The chain runs to 246 residues: 3-deoxy-manno-octulosonate cytidylyltransferase (246 aa).

Belongs to the KdsB family.

It is found in the cytoplasm. It catalyses the reaction 3-deoxy-alpha-D-manno-oct-2-ulosonate + CTP = CMP-3-deoxy-beta-D-manno-octulosonate + diphosphate. The protein operates within nucleotide-sugar biosynthesis; CMP-3-deoxy-D-manno-octulosonate biosynthesis; CMP-3-deoxy-D-manno-octulosonate from 3-deoxy-D-manno-octulosonate and CTP: step 1/1. It functions in the pathway bacterial outer membrane biogenesis; lipopolysaccharide biosynthesis. Functionally, activates KDO (a required 8-carbon sugar) for incorporation into bacterial lipopolysaccharide in Gram-negative bacteria. The sequence is that of 3-deoxy-manno-octulosonate cytidylyltransferase from Leptospira biflexa serovar Patoc (strain Patoc 1 / Ames).